The chain runs to 249 residues: Cysteine desulfuration protein SufE (249 aa).

Catalysis depends on C154, which acts as the Cysteine persulfide intermediate.

Belongs to the SufE family. In terms of assembly, monomer. Interacts with SufS; interaction enhances cysteine desulfurase activity of SufS. Post-translationally, proteolytically cleaved.

Its subcellular location is the plastid. The protein resides in the apicoplast. The protein operates within cofactor biosynthesis; iron-sulfur cluster biosynthesis. Its function is as follows. Participates in sulfur mobilization (SUF) pathway for iron-sulfur (Fe-S) cluster biogenesis. Enhances cysteine desulfurase activity of SufS. Probably functions as a sulfur acceptor for SufS. This is Cysteine desulfuration protein SufE from Plasmodium falciparum (isolate 3D7).